Reading from the N-terminus, the 112-residue chain is Probable fatty acid-binding protein (112 aa).

The protein belongs to the calycin superfamily. Fatty-acid binding protein (FABP) family.

In Anopheles gambiae (African malaria mosquito), this protein is Probable fatty acid-binding protein.